The primary structure comprises 438 residues: V-type ATP synthase beta chain (438 aa).

This sequence belongs to the ATPase alpha/beta chains family.

Produces ATP from ADP in the presence of a proton gradient across the membrane. The V-type beta chain is a regulatory subunit. The protein is V-type ATP synthase beta chain of Chlamydia abortus (strain DSM 27085 / S26/3) (Chlamydophila abortus).